We begin with the raw amino-acid sequence, 334 residues long: Glycerol-3-phosphate dehydrogenase [NAD(P)+] (334 aa).

Ser10, Trp11, His31, Arg32, and Lys105 together coordinate NADPH. Residues Lys105, Gly136, and Ser138 each contribute to the sn-glycerol 3-phosphate site. Ala140 contacts NADPH. 5 residues coordinate sn-glycerol 3-phosphate: Lys191, Asp244, Ser254, Arg255, and Asn256. Catalysis depends on Lys191, which acts as the Proton acceptor. Residue Arg255 coordinates NADPH. NADPH is bound by residues Val279 and Glu281.

It belongs to the NAD-dependent glycerol-3-phosphate dehydrogenase family.

It localises to the cytoplasm. The enzyme catalyses sn-glycerol 3-phosphate + NAD(+) = dihydroxyacetone phosphate + NADH + H(+). It carries out the reaction sn-glycerol 3-phosphate + NADP(+) = dihydroxyacetone phosphate + NADPH + H(+). It participates in membrane lipid metabolism; glycerophospholipid metabolism. Its function is as follows. Catalyzes the reduction of the glycolytic intermediate dihydroxyacetone phosphate (DHAP) to sn-glycerol 3-phosphate (G3P), the key precursor for phospholipid synthesis. The polypeptide is Glycerol-3-phosphate dehydrogenase [NAD(P)+] (Chlorobium phaeobacteroides (strain BS1)).